The primary structure comprises 494 residues: Sulfate adenylyltransferase subunit 1 (494 aa).

Residues 28 to 242 enclose the tr-type G domain; that stretch reads TRPLRLITCG…TLELATVRST (215 aa). A G1 region spans residues 37-44; the sequence is GSVDDGKS. 37–44 lines the GTP pocket; it reads GSVDDGKS. A G2 region spans residues 94–98; that stretch reads GITID. Positions 115-118 are G3; sequence DTPG. GTP contacts are provided by residues 115 to 119 and 170 to 173; these read DTPGH and NKID. Residues 170-173 are G4; the sequence is NKID. The segment at 207 to 209 is G5; sequence SAL.

It belongs to the TRAFAC class translation factor GTPase superfamily. Classic translation factor GTPase family. CysN/NodQ subfamily. In terms of assembly, heterodimer composed of CysD, the smaller subunit, and CysN.

It carries out the reaction sulfate + ATP + H(+) = adenosine 5'-phosphosulfate + diphosphate. Its pathway is sulfur metabolism; hydrogen sulfide biosynthesis; sulfite from sulfate: step 1/3. With CysD forms the ATP sulfurylase (ATPS) that catalyzes the adenylation of sulfate producing adenosine 5'-phosphosulfate (APS) and diphosphate, the first enzymatic step in sulfur assimilation pathway. APS synthesis involves the formation of a high-energy phosphoric-sulfuric acid anhydride bond driven by GTP hydrolysis by CysN coupled to ATP hydrolysis by CysD. In Agrobacterium fabrum (strain C58 / ATCC 33970) (Agrobacterium tumefaciens (strain C58)), this protein is Sulfate adenylyltransferase subunit 1.